Here is a 75-residue protein sequence, read N- to C-terminus: Parvalbumin beta 3 (75 aa).

N-acetylalanine is present on Ala1. In terms of domain architecture, EF-hand spans 26 to 61 (YKAFFAKKAFFVIDQDKSGFIEEDELKLFLQVFSAG). Ca(2+)-binding residues include Asp39, Asp41, Ser43, Phe45, Glu47, and Glu50.

This sequence belongs to the parvalbumin family.

In muscle, parvalbumin is thought to be involved in relaxation after contraction. It binds two calcium ions. The chain is Parvalbumin beta 3 from Merluccius gayi (South Pacific hake).